Here is a 145-residue protein sequence, read N- to C-terminus: MPGKILLLNGPNLNMLGKREPDIYGHDTLEDVVALATAEAAKHGLEVEALQSNHEGELIDALHNARGTHIGCVINPGGLTHTSVALLDAVKASELPTVEVHISNPHAREEFRHHSYISLAAVSVIAGAGIQGYRFAVDILANLKK.

Tyr24 functions as the Proton acceptor in the catalytic mechanism. Substrate is bound by residues Asn75, His81, and Asp88. His101 acts as the Proton donor in catalysis. Substrate contacts are provided by residues 102-103 (IS) and Arg112.

This sequence belongs to the type-II 3-dehydroquinase family. Homododecamer.

It carries out the reaction 3-dehydroquinate = 3-dehydroshikimate + H2O. It functions in the pathway metabolic intermediate biosynthesis; chorismate biosynthesis; chorismate from D-erythrose 4-phosphate and phosphoenolpyruvate: step 3/7. In terms of biological role, catalyzes a trans-dehydration via an enolate intermediate. The sequence is that of 3-dehydroquinate dehydratase (aroQ) from Corynebacterium glutamicum (strain ATCC 13032 / DSM 20300 / JCM 1318 / BCRC 11384 / CCUG 27702 / LMG 3730 / NBRC 12168 / NCIMB 10025 / NRRL B-2784 / 534).